The following is a 153-amino-acid chain: uncharacterized protein (153 aa).

The next 2 helical transmembrane spans lie at Met1–Ser21 and Ile106–Ile126.

Its subcellular location is the membrane. This is an uncharacterized protein from Saccharomyces cerevisiae (strain ATCC 204508 / S288c) (Baker's yeast).